The primary structure comprises 53 residues: IgW transmembrane form Tm1T3/Tm6T3/Tm3C4 (53 aa).

The disordered stretch occupies residues 1–25 (VQAVPPDVKGEEGKEEVEDMDGDDN). Acidic residues predominate over residues 13 to 24 (GKEEVEDMDGDD). The chain crosses the membrane as a helical span at residues 29–49 (VAAFAILFILSFLYSTFVTVV).

As to expression, expressed in the spleen, pancreas, peripheral blood lymphocytes and at low levels in the epigonal organ.

It is found in the membrane. The chain is IgW transmembrane form Tm1T3/Tm6T3/Tm3C4 from Ginglymostoma cirratum (Nurse shark).